Consider the following 217-residue polypeptide: Large ribosomal subunit protein uL1 (217 aa).

Belongs to the universal ribosomal protein uL1 family. Component of the large ribosomal subunit (LSU). Mature N.crassa ribosomes consist of a small (40S) and a large (60S) subunit. The 40S small subunit contains 1 molecule of ribosomal RNA (18S rRNA) and at least 32 different proteins. The large 60S subunit contains 3 rRNA molecules (26S, 5.8S and 5S rRNA) and at least 42 different proteins. uL1 forms part of the L1 stalk.

The protein localises to the cytoplasm. Functionally, component of the ribosome, a large ribonucleoprotein complex responsible for the synthesis of proteins in the cell. The small ribosomal subunit (SSU) binds messenger RNAs (mRNAs) and translates the encoded message by selecting cognate aminoacyl-transfer RNA (tRNA) molecules. The large subunit (LSU) contains the ribosomal catalytic site termed the peptidyl transferase center (PTC), which catalyzes the formation of peptide bonds, thereby polymerizing the amino acids delivered by tRNAs into a polypeptide chain. The nascent polypeptides leave the ribosome through a tunnel in the LSU and interact with protein factors that function in enzymatic processing, targeting, and the membrane insertion of nascent chains at the exit of the ribosomal tunnel. uL1 forms part of the L1 stalk, a mobile element that plays a role in evacuating the exit-site tRNA. The sequence is that of Large ribosomal subunit protein uL1 (crp-74) from Neurospora crassa (strain ATCC 24698 / 74-OR23-1A / CBS 708.71 / DSM 1257 / FGSC 987).